Reading from the N-terminus, the 547-residue chain is Apicoplast pyruvate carrier 1 (547 aa).

Residues 1–33 (MEPRAPPRLSVSSPRRESGATVPSHSPSTLLSC) form a disordered region. The Cytoplasmic portion of the chain corresponds to 1-45 (MEPRAPPRLSVSSPRRESGATVPSHSPSTLLSCASSETATEKRRR). Positions 21–33 (TVPSHSPSTLLSC) are enriched in polar residues. Transmembrane regions (helical) follow at residues 46–66 (WTGV…GTVY), 126–146 (AWVL…GGIA), 167–187 (VGMA…FGVI), 189–209 (GVGL…WFPE), 212–232 (GIVS…FSPL), 278–298 (LLAV…RVPA), 345–365 (ALVS…GLAI), 385–405 (ILTE…NAVG), 417–437 (GFQT…FFLP), 445–465 (LCYA…FSVF), 467–487 (SAVA…FIFG), and 515–535 (LMGL…ALSP).

This sequence belongs to the major facilitator superfamily. In terms of assembly, interacts with apicoplast pyruvate carrier 2.

Its subcellular location is the plastid. The protein localises to the apicoplast. The protein resides in the membrane. Functionally, along with apicoplast pyruvate carrier 2, forms apicoplast pyruvate carrier (APC) complex, which transports pyruvate into the apicoplast and may also transport amino acids like methionine, serine, glycine and tryptophan with low efficiency. Required for maintaining pyruvate-dependent metabolic activities in the apicoplast, such as synthesis of fatty acids, isopentenyl pyrophosphate (IPP), dimethylallyl pyrophosphate (DMAPP) and methylerythritol 4-phosphate (MEP). Required for maintaining the integrity of the apicoplast. Required for normal parasite growth. This Toxoplasma gondii protein is Apicoplast pyruvate carrier 1.